Here is a 63-residue protein sequence, read N- to C-terminus: Large ribosomal subunit protein uL29 (63 aa).

It belongs to the universal ribosomal protein uL29 family.

The chain is Large ribosomal subunit protein uL29 from Sodalis glossinidius (strain morsitans).